A 137-amino-acid polypeptide reads, in one-letter code: Large ribosomal subunit protein uL16 (137 aa).

Basic residues predominate over residues 1 to 19 (MLSPKKVKFRKQQRGRRTG). The tract at residues 1-20 (MLSPKKVKFRKQQRGRRTGT) is disordered.

Belongs to the universal ribosomal protein uL16 family. As to quaternary structure, part of the 50S ribosomal subunit.

Functionally, binds 23S rRNA and is also seen to make contacts with the A and possibly P site tRNAs. This Desulfosudis oleivorans (strain DSM 6200 / JCM 39069 / Hxd3) (Desulfococcus oleovorans) protein is Large ribosomal subunit protein uL16.